The primary structure comprises 80 residues: Small ribosomal subunit protein uS17 (80 aa).

Belongs to the universal ribosomal protein uS17 family. As to quaternary structure, part of the 30S ribosomal subunit.

Its function is as follows. One of the primary rRNA binding proteins, it binds specifically to the 5'-end of 16S ribosomal RNA. The polypeptide is Small ribosomal subunit protein uS17 (Brucella anthropi (strain ATCC 49188 / DSM 6882 / CCUG 24695 / JCM 21032 / LMG 3331 / NBRC 15819 / NCTC 12168 / Alc 37) (Ochrobactrum anthropi)).